A 402-amino-acid polypeptide reads, in one-letter code: Protein lag-2 (402 aa).

A signal peptide spans 1–15; sequence MIAYFLLLLTCLPVL. The Extracellular portion of the chain corresponds to 16 to 279; that stretch reads QARVEVHQEF…TTTTPTTVEI (264 aa). N-linked (GlcNAc...) asparagine glycosylation is found at Asn72 and Asn105. The DSL domain maps to 122–166; sequence VTCARNYFGNRCENFCDAHLAKAARKRCDAMGRLRCDIGWMGPHC. 9 disulfides stabilise this stretch: Cys124–Cys133, Cys137–Cys149, Cys157–Cys166, Cys175–Cys183, Cys177–Cys204, Cys206–Cys215, Cys233–Cys245, Cys239–Cys254, and Cys256–Cys265. EGF-like domains are found at residues 171-216 and 229-266; these read DPRK…TRCE and RPDACSVKDACLNGAKCFPNGPKVFCSCAVGFIGEFCE. Asn194 carries an N-linked (GlcNAc...) asparagine glycan. Residues 280-306 form a helical membrane-spanning segment; the sequence is TVSTSGYSSAVYITVALFVIFSIIIGC. The Cytoplasmic segment spans residues 307-402; the sequence is FKYKFKPMRQ…PPSIPACHYV (96 aa).

In terms of assembly, may interact with lin-12 / Notch receptor. Expressed in the gonad distal tip cell (DTC) of hermaphrodites.

The protein localises to the cell membrane. Functionally, probable ligand for lin-12/Notch and glp-1/Notch receptors and involved in the mediation of Notch signaling. Involved in the lin-12/Notch pathway signaling of cell fate in vulval precursor cells (VPCs) and in the postembryonic mesodermal lineage (M lineage), acting redundantly with dsl-1 and apx-1. Functions in uterine cells to promote basement membrane mobility during tissue remodeling. Required for oocyte growth control, acting redundantly with apx-1, perhaps signaling via the glp-1/Notch pathway. Plays a role in Notch-dependent induction of left-right asymmetry in interneurons and motoneurons. Involved in maintaining the developmentally arrested larval state known as dauer, probably signaling in the glp-1/Notch pathway. Required for normal sleep bout quantity and arousal thresholds during the transition from the last larval stage to adulthood in well-fed animals. The protein is Protein lag-2 of Caenorhabditis elegans.